Here is a 433-residue protein sequence, read N- to C-terminus: Oxidoreductase acuF (433 aa).

It functions in the pathway secondary metabolite biosynthesis. Its function is as follows. Oxidoreductase; part of the gene cluster that mediates the biosynthesis of aculins. The pathway begins with the synthesis of 6-methylsalicylic acid by the polyketide synthase (PKS) acuA via condensation of acetate and malonate units. The 6-methylsalicylic acid decarboxylase acuB then catalyzes the decarboxylation of 6-methylsalicylic acid to yield m-cresol (also known as 3-methylphenol). These first reactions occur in the cytosol. The intermediate m-cresol is then transported into the endoplasmic reticulum where the cytochrome P450 monooxygenase acuC converts it to m-hydroxybenzyl alcohol, which is further converted to gentisyl alcohol by the cytochrome P450 monooxygenase acuD. Gentisyl alcohol is further oxidized by the oxidoreductase acuE that probably catalyzes hydroxylation of the aromatic ring. The aromatic system might then be opened by oxidation through a Baeyer-Villiger type of oxidation, which could be catalyzed by acuF, with the carboxylic acid at C-1 subsequently reduced to an aldehyde by acuG. Subsequently, a hemiacetal is formed, before the dehydrogenase acuH would reduce the double bond between C-4 and C-6. Finally, keto-enol tautomerism results in formation of aculinic acid, which exists as two diastereomers (both R/S configurations at C-1) by non-enzymatic hemiacetal formation. The carboxypeptidase acuI could be involved in the linking of aculinic acid to an aculene A moiety produced by the aculene biosynthesis cluster and which leads to the production of aculin A. AcuI may also be involved in the attachment of proline to aculinic acid to form epi-aculins A and B. The chain is Oxidoreductase acuF from Aspergillus aculeatus (strain ATCC 16872 / CBS 172.66 / WB 5094).